The chain runs to 66 residues: Large ribosomal subunit protein bL35 (66 aa).

The tract at residues 20–40 is disordered; it reads GKIKSTQSAKRHGMTKRSKRS. Over residues 28–40 the composition is skewed to basic residues; sequence AKRHGMTKRSKRS.

It belongs to the bacterial ribosomal protein bL35 family.

In Ehrlichia chaffeensis (strain ATCC CRL-10679 / Arkansas), this protein is Large ribosomal subunit protein bL35.